We begin with the raw amino-acid sequence, 258 residues long: UPF0246 protein PM0066 (258 aa).

Belongs to the UPF0246 family.

This is UPF0246 protein PM0066 from Pasteurella multocida (strain Pm70).